The following is a 1135-amino-acid chain: Exportin-5 (1135 aa).

In terms of domain architecture, Importin N-terminal spans 32–117 (SQVFLEEIKT…KEKLVTILVD (86 aa)). A pre-siRNA binding region spans residues 630–631 (TE).

This sequence belongs to the exportin family. As to quaternary structure, found in a nuclear export complex with RanGTP, exportin and pre-miRNA.

It is found in the nucleus. The protein localises to the cytoplasm. In terms of biological role, mediates the nuclear export of proteins bearing a double-stranded RNA binding domain (dsRBD) and double-stranded RNAs (cargos). Mediates the nuclear export of micro-RNA precursors, which form short hairpins. This Dictyostelium discoideum (Social amoeba) protein is Exportin-5 (xpo5).